The chain runs to 315 residues: tRNA dimethylallyltransferase (315 aa).

Residue 13-20 coordinates ATP; that stretch reads GPTAVGKT. 15–20 lines the substrate pocket; sequence TAVGKT. Residues 38–41 are interaction with substrate tRNA; sequence DSRL.

Belongs to the IPP transferase family. Monomer. Requires Mg(2+) as cofactor.

The catalysed reaction is adenosine(37) in tRNA + dimethylallyl diphosphate = N(6)-dimethylallyladenosine(37) in tRNA + diphosphate. Its function is as follows. Catalyzes the transfer of a dimethylallyl group onto the adenine at position 37 in tRNAs that read codons beginning with uridine, leading to the formation of N6-(dimethylallyl)adenosine (i(6)A). This chain is tRNA dimethylallyltransferase, found in Herpetosiphon aurantiacus (strain ATCC 23779 / DSM 785 / 114-95).